Consider the following 746-residue polypeptide: Ferric enterobactin receptor (746 aa).

An N-terminal signal peptide occupies residues 1 to 25; that stretch reads MSSRALPAVPFLLLSSCLLANAVHA. The short motif at 39 to 44 is the TonB box element; it reads QTVVAT. One can recognise a TBDR plug domain in the interval 47 to 174; sequence EETKQAPGVS…AGGVVNIITK (128 aa). Disordered stretches follow at residues 82–102, 235–254, and 397–424; these read VNLTGNSSSGQRGNNRQIDIR, GHESNRTGKQAGTLPAGREG, and QKLDDPSSNTQNTEEGGSIPGLAGKNRS. The segment covering 84 to 98 has biased composition (polar residues); the sequence is LTGNSSSGQRGNNRQ. Positions 179–746 constitute a TBDR beta-barrel domain; sequence ETHGNLSVYS…TFYTSLTASF (568 aa). Residues 402-411 are compositionally biased toward polar residues; that stretch reads PSSNTQNTEE. Positions 729-746 match the TonB C-terminal box motif; sequence ATYNEPGRTFYTSLTASF.

This sequence belongs to the TonB-dependent receptor family.

Its subcellular location is the cell outer membrane. Its function is as follows. Specific receptor for the siderophore ferric enterobactin. The polypeptide is Ferric enterobactin receptor (pfeA) (Pseudomonas aeruginosa (strain ATCC 15692 / DSM 22644 / CIP 104116 / JCM 14847 / LMG 12228 / 1C / PRS 101 / PAO1)).